A 110-amino-acid chain; its full sequence is UPF0145 protein (110 aa).

This sequence belongs to the UPF0145 family.

The sequence is that of UPF0145 protein from Listeria welshimeri.